Here is a 190-residue protein sequence, read N- to C-terminus: Xanthine phosphoribosyltransferase (190 aa).

Xanthine contacts are provided by Leu20 and Asn27. 128–132 (ANGHA) lines the 5-phospho-alpha-D-ribose 1-diphosphate pocket. Lys156 contributes to the xanthine binding site.

This sequence belongs to the purine/pyrimidine phosphoribosyltransferase family. Xpt subfamily. As to quaternary structure, homodimer.

The protein resides in the cytoplasm. The enzyme catalyses XMP + diphosphate = xanthine + 5-phospho-alpha-D-ribose 1-diphosphate. It participates in purine metabolism; XMP biosynthesis via salvage pathway; XMP from xanthine: step 1/1. In terms of biological role, converts the preformed base xanthine, a product of nucleic acid breakdown, to xanthosine 5'-monophosphate (XMP), so it can be reused for RNA or DNA synthesis. The protein is Xanthine phosphoribosyltransferase of Ectopseudomonas mendocina (strain ymp) (Pseudomonas mendocina).